We begin with the raw amino-acid sequence, 476 residues long: Bifunctional protein HldE (476 aa).

Residues methionine 1–threonine 318 form a ribokinase region. Position 195-198 (asparagine 195–glutamate 198) interacts with ATP. Aspartate 264 is an active-site residue. The interval methionine 344–glycine 476 is cytidylyltransferase.

It in the N-terminal section; belongs to the carbohydrate kinase PfkB family. This sequence in the C-terminal section; belongs to the cytidylyltransferase family. As to quaternary structure, homodimer.

The catalysed reaction is D-glycero-beta-D-manno-heptose 7-phosphate + ATP = D-glycero-beta-D-manno-heptose 1,7-bisphosphate + ADP + H(+). It carries out the reaction D-glycero-beta-D-manno-heptose 1-phosphate + ATP + H(+) = ADP-D-glycero-beta-D-manno-heptose + diphosphate. It participates in nucleotide-sugar biosynthesis; ADP-L-glycero-beta-D-manno-heptose biosynthesis; ADP-L-glycero-beta-D-manno-heptose from D-glycero-beta-D-manno-heptose 7-phosphate: step 1/4. Its pathway is nucleotide-sugar biosynthesis; ADP-L-glycero-beta-D-manno-heptose biosynthesis; ADP-L-glycero-beta-D-manno-heptose from D-glycero-beta-D-manno-heptose 7-phosphate: step 3/4. The protein operates within bacterial outer membrane biogenesis; LPS core biosynthesis. In terms of biological role, catalyzes the phosphorylation of D-glycero-D-manno-heptose 7-phosphate at the C-1 position to selectively form D-glycero-beta-D-manno-heptose-1,7-bisphosphate. Its function is as follows. Catalyzes the ADP transfer from ATP to D-glycero-beta-D-manno-heptose 1-phosphate, yielding ADP-D-glycero-beta-D-manno-heptose. The sequence is that of Bifunctional protein HldE from Vibrio parahaemolyticus serotype O3:K6 (strain RIMD 2210633).